Consider the following 365-residue polypeptide: Uroporphyrinogen decarboxylase (365 aa).

Residues 1-17 (MSANDSPSGQQTTTSAS) show a composition bias toward polar residues. Positions 1–20 (MSANDSPSGQQTTTSASLDA) are disordered. Substrate is bound by residues 48–52 (RQAGR), aspartate 97, tyrosine 172, serine 227, and histidine 341.

It belongs to the uroporphyrinogen decarboxylase family. As to quaternary structure, homodimer.

The protein localises to the cytoplasm. The catalysed reaction is uroporphyrinogen III + 4 H(+) = coproporphyrinogen III + 4 CO2. The protein operates within porphyrin-containing compound metabolism; protoporphyrin-IX biosynthesis; coproporphyrinogen-III from 5-aminolevulinate: step 4/4. In terms of biological role, catalyzes the decarboxylation of four acetate groups of uroporphyrinogen-III to yield coproporphyrinogen-III. This chain is Uroporphyrinogen decarboxylase, found in Streptomyces griseus subsp. griseus (strain JCM 4626 / CBS 651.72 / NBRC 13350 / KCC S-0626 / ISP 5235).